A 139-amino-acid polypeptide reads, in one-letter code: uncharacterized protein (139 aa).

It to M.tuberculosis Rv2798c.

This is an uncharacterized protein from Mycobacterium tuberculosis (strain CDC 1551 / Oshkosh).